The following is a 331-amino-acid chain: MIKIGNIELSSNIILAPMSGVTDLEFRRLVKRFGAGLVVSEMVASRAMIVESRQSLKKSAIMRDDATSACVQLAGCEPNVIAEAAKMNEGMGAKIIDLNFGCPAKKVVGGYSGSALMKDEQLAAKIFEATVEAVKLPVTVKMRMGWDDNTKNAPTLAKIAESSGVQMITVHGRTRCQFYSGNADWDFIRSVKESVKIPVIANGDITNFAKAKEALQKSGADGIMVGRGAYGKPWLISQIDHYLKTGEEKSAPSIAEQLDIVTEHYEAILDYYGESVGVPIARKHIGWYSSGLPNSAEFRGAVNLMNDPLAVKEKIAEFYTSVMETNKLKEF.

FMN-binding positions include 17–19 (PMS) and Q72. C102 acts as the Proton donor in catalysis. Residues K141, 202–204 (NGD), and 226–227 (GR) contribute to the FMN site.

This sequence belongs to the Dus family. The cofactor is FMN.

The catalysed reaction is a 5,6-dihydrouridine in tRNA + NAD(+) = a uridine in tRNA + NADH + H(+). It catalyses the reaction a 5,6-dihydrouridine in tRNA + NADP(+) = a uridine in tRNA + NADPH + H(+). Its function is as follows. Catalyzes the synthesis of 5,6-dihydrouridine (D), a modified base found in the D-loop of most tRNAs, via the reduction of the C5-C6 double bond in target uridines. The chain is Probable tRNA-dihydrouridine synthase (dus) from Rickettsia conorii (strain ATCC VR-613 / Malish 7).